A 427-amino-acid chain; its full sequence is Glutamate-1-semialdehyde 2,1-aminomutase (427 aa).

The residue at position 267 (K267) is an N6-(pyridoxal phosphate)lysine.

Belongs to the class-III pyridoxal-phosphate-dependent aminotransferase family. HemL subfamily. In terms of assembly, homodimer. Pyridoxal 5'-phosphate serves as cofactor.

It is found in the cytoplasm. It carries out the reaction (S)-4-amino-5-oxopentanoate = 5-aminolevulinate. It functions in the pathway porphyrin-containing compound metabolism; protoporphyrin-IX biosynthesis; 5-aminolevulinate from L-glutamyl-tRNA(Glu): step 2/2. This chain is Glutamate-1-semialdehyde 2,1-aminomutase, found in Acetivibrio thermocellus (strain ATCC 27405 / DSM 1237 / JCM 9322 / NBRC 103400 / NCIMB 10682 / NRRL B-4536 / VPI 7372) (Clostridium thermocellum).